The primary structure comprises 491 residues: Putative diacyglycerol O-acyltransferase MT2557 (491 aa).

His-145 (proton acceptor) is an active-site residue.

It belongs to the long-chain O-acyltransferase family.

It carries out the reaction an acyl-CoA + a 1,2-diacyl-sn-glycerol = a triacyl-sn-glycerol + CoA. Its pathway is glycerolipid metabolism; triacylglycerol biosynthesis. The protein is Putative diacyglycerol O-acyltransferase MT2557 of Mycobacterium tuberculosis (strain CDC 1551 / Oshkosh).